The following is a 1379-amino-acid chain: DNA-directed RNA polymerase subunit beta'' (1379 aa).

The Zn(2+) site is built by Cys-220, Cys-291, Cys-298, and Cys-301.

Belongs to the RNA polymerase beta' chain family. RpoC2 subfamily. In plastids the minimal PEP RNA polymerase catalytic core is composed of four subunits: alpha, beta, beta', and beta''. When a (nuclear-encoded) sigma factor is associated with the core the holoenzyme is formed, which can initiate transcription. Requires Zn(2+) as cofactor.

The protein resides in the plastid. The catalysed reaction is RNA(n) + a ribonucleoside 5'-triphosphate = RNA(n+1) + diphosphate. DNA-dependent RNA polymerase catalyzes the transcription of DNA into RNA using the four ribonucleoside triphosphates as substrates. The polypeptide is DNA-directed RNA polymerase subunit beta'' (Cuscuta reflexa (Southern Asian dodder)).